A 209-amino-acid chain; its full sequence is 3-dehydroquinate dehydratase (209 aa).

3-dehydroquinate is bound by residues Ser-6, Glu-25–Arg-27, and Arg-55. Residue His-109 is the Proton donor/acceptor of the active site. Catalysis depends on Lys-134, which acts as the Schiff-base intermediate with substrate. Residues Arg-172 and Gln-195 each coordinate 3-dehydroquinate.

Belongs to the type-I 3-dehydroquinase family. In terms of assembly, homodimer.

It carries out the reaction 3-dehydroquinate = 3-dehydroshikimate + H2O. It functions in the pathway metabolic intermediate biosynthesis; chorismate biosynthesis; chorismate from D-erythrose 4-phosphate and phosphoenolpyruvate: step 3/7. Involved in the third step of the chorismate pathway, which leads to the biosynthesis of aromatic amino acids. Catalyzes the cis-dehydration of 3-dehydroquinate (DHQ) and introduces the first double bond of the aromatic ring to yield 3-dehydroshikimate. This Methanoregula boonei (strain DSM 21154 / JCM 14090 / 6A8) protein is 3-dehydroquinate dehydratase.